We begin with the raw amino-acid sequence, 446 residues long: tRNA modification GTPase MnmE (446 aa).

Residues Arg-22, Glu-80, and Lys-119 each coordinate (6S)-5-formyl-5,6,7,8-tetrahydrofolate. Residues 215–370 form the TrmE-type G domain; it reads GLSLVIAGRP…LKKVIKQVVG (156 aa). Position 225 (Asn-225) interacts with K(+). GTP contacts are provided by residues 225 to 230, 244 to 250, and 269 to 272; these read NAGKST, TEIAGTT, and DTAG. Ser-229 is a Mg(2+) binding site. Residues Thr-244, Ile-246, and Thr-249 each contribute to the K(+) site. Mg(2+) is bound at residue Thr-250. Position 446 (Lys-446) interacts with (6S)-5-formyl-5,6,7,8-tetrahydrofolate.

This sequence belongs to the TRAFAC class TrmE-Era-EngA-EngB-Septin-like GTPase superfamily. TrmE GTPase family. In terms of assembly, homodimer. Heterotetramer of two MnmE and two MnmG subunits. Requires K(+) as cofactor.

The protein localises to the cytoplasm. Functionally, exhibits a very high intrinsic GTPase hydrolysis rate. Involved in the addition of a carboxymethylaminomethyl (cmnm) group at the wobble position (U34) of certain tRNAs, forming tRNA-cmnm(5)s(2)U34. In Legionella pneumophila subsp. pneumophila (strain Philadelphia 1 / ATCC 33152 / DSM 7513), this protein is tRNA modification GTPase MnmE.